The sequence spans 115 residues: Somatostatin-1 (115 aa).

An N-terminal signal peptide occupies residues 1–24 (MLSCRFQCALVLLSLAVVFSKVSA). The propeptide occupies 25 to 88 (APSDLRLRQL…QDEVRLELDR (64 aa)). The segment at 65–95 (NDALDSSDLSRGADQDEVRLELDRSANSSPL) is disordered. The segment covering 75–88 (RGADQDEVRLELDR) has biased composition (basic and acidic residues). Residues Cys-104 and Cys-115 are joined by a disulfide bond.

Belongs to the somatostatin family.

Its subcellular location is the secreted. Functionally, somatostatin inhibits the release of somatotropin. This Protopterus annectens (African lungfish) protein is Somatostatin-1 (sst1).